Reading from the N-terminus, the 255-residue chain is 5'-nucleotidase SurE (255 aa).

Residues Asp8, Asp9, Ser39, and Asn95 each contribute to the a divalent metal cation site.

Belongs to the SurE nucleotidase family. A divalent metal cation serves as cofactor.

It is found in the cytoplasm. The catalysed reaction is a ribonucleoside 5'-phosphate + H2O = a ribonucleoside + phosphate. Functionally, nucleotidase that shows phosphatase activity on nucleoside 5'-monophosphates. The polypeptide is 5'-nucleotidase SurE (Thermosipho melanesiensis (strain DSM 12029 / CIP 104789 / BI429)).